The following is a 339-amino-acid chain: 2-deoxy-scyllo-inosamine dehydrogenase (339 aa).

7 residues coordinate Zn(2+): C37, H59, C88, C91, C94, C102, and E143.

This sequence belongs to the zinc-containing alcohol dehydrogenase family. DOIA dehydrogenase subfamily. It depends on Zn(2+) as a cofactor.

The catalysed reaction is 2-deoxy-scyllo-inosamine + NADP(+) = 3-amino-2,3-dideoxy-scyllo-inosose + NADPH + H(+). It carries out the reaction 2-deoxy-scyllo-inosamine + NAD(+) = 3-amino-2,3-dideoxy-scyllo-inosose + NADH + H(+). The protein operates within metabolic intermediate biosynthesis; 2-deoxystreptamine biosynthesis; 2-deoxystreptamine from D-glucose 6-phosphate: step 3/4. Its pathway is antibiotic biosynthesis; paromomycin biosynthesis. Functionally, catalyzes the oxidation of 2-deoxy-scyllo-inosamine (DOIA) with NAD(+) or NADP(+), forming 3-amino-2,3-dideoxy-scyllo-inosose (amino-DOI). The polypeptide is 2-deoxy-scyllo-inosamine dehydrogenase (parE) (Streptomyces paromomycinus (Streptomyces rimosus subsp. paromomycinus)).